We begin with the raw amino-acid sequence, 424 residues long: MKPQWQQYIHIIKQVVKPALGCTEPIAAAYAAAVARALLGVEPDSIAVQVSDNLYKNSMGVFVPGTGKIGLAIAAAAGAIAGNPDAGLEVLAVITPEQVAKAQALIDAGKVTVERTETAEFIYCCVIAKKGDREALVKICGGHTLIAEKRLNGESVFSVDSTQAKATGSICEGVDITIESIYRFAQEVPFEEIKFILEASELNGKLSDEGMANPYGLEVGRTMKSGIAAGIIGEDLLNKIVMLTAAASDARMGGANLPAMSNLGSGNQGIAATIPVVLTAQCYKVSEEQLARALIMSHLGAIYIKSHYPPLSAFCGNTVTSAAASMAMVYLAGGSFEQSCFAIQNVISDSSGMVCDGAKASCAMKVSTSSSAAVRSFLMALSSHNVSGQGIIATDVEKTIKNIGKMILNGMSSTDVTIIDIMSA.

The protein belongs to the UPF0597 family.

This is UPF0597 protein Shew185_3080 from Shewanella baltica (strain OS185).